We begin with the raw amino-acid sequence, 216 residues long: Acyl-homoserine-lactone synthase (216 aa).

It belongs to the autoinducer synthase family.

It catalyses the reaction a fatty acyl-[ACP] + S-adenosyl-L-methionine = an N-acyl-L-homoserine lactone + S-methyl-5'-thioadenosine + holo-[ACP] + H(+). Its function is as follows. Required for the synthesis of an acyl-HSL autoinducer that binds to YukR and which is involved in the regulation of motility and morphology. The sequence is that of Acyl-homoserine-lactone synthase (yukI) from Yersinia ruckeri.